Reading from the N-terminus, the 306-residue chain is tRNA dimethylallyltransferase (306 aa).

Residue 12–19 (GPTGVGKS) coordinates ATP. 14–19 (TGVGKS) lines the substrate pocket.

It belongs to the IPP transferase family. Monomer. Mg(2+) is required as a cofactor.

The catalysed reaction is adenosine(37) in tRNA + dimethylallyl diphosphate = N(6)-dimethylallyladenosine(37) in tRNA + diphosphate. Functionally, catalyzes the transfer of a dimethylallyl group onto the adenine at position 37 in tRNAs that read codons beginning with uridine, leading to the formation of N6-(dimethylallyl)adenosine (i(6)A). This is tRNA dimethylallyltransferase from Desulfatibacillum aliphaticivorans.